A 264-amino-acid chain; its full sequence is uncharacterized protein (264 aa).

This is an uncharacterized protein from Shigella flexneri.